The primary structure comprises 767 residues: DNA topoisomerase 1 (767 aa).

Over residues 1–23 the composition is skewed to basic and acidic residues; that stretch reads MSGDHLHNDSQIEADFRLNDSHK. The disordered stretch occupies residues 1–201; the sequence is MSGDHLHNDS…NKKKKPKKEE (201 aa). Ser2 is subject to N-acetylserine. 2 positions are modified to phosphoserine: Ser2 and Ser10. Positions 24–39 are enriched in basic residues; sequence HKDKHKDREHRHKEHK. Basic and acidic residues predominate over residues 40 to 110; sequence KDKEKDREKS…DAKIKKEKEN (71 aa). Ser59 is subject to Phosphoserine. Lys103 is covalently cross-linked (Glycyl lysine isopeptide (Lys-Gly) (interchain with G-Cter in SUMO2)). Lys105 participates in a covalent cross-link: Glycyl lysine isopeptide (Lys-Gly) (interchain with G-Cter in SUMO); alternate. A Glycyl lysine isopeptide (Lys-Gly) (interchain with G-Cter in SUMO2); alternate cross-link involves residue Lys105. The residue at position 114 (Ser114) is a Phosphoserine. A Glycyl lysine isopeptide (Lys-Gly) (interchain with G-Cter in SUMO); alternate cross-link involves residue Lys119. Lys119 is covalently cross-linked (Glycyl lysine isopeptide (Lys-Gly) (interchain with G-Cter in SUMO2); alternate). Lys119 participates in a covalent cross-link: Glycyl lysine isopeptide (Lys-Gly) (interchain with G-Cter in SUMO1); alternate. Basic and acidic residues predominate over residues 131-168; the sequence is PKEDIKPLKRPRDEDDADYKPKKIKTEDIKKEKKRKLE. Residues Lys136 and Lys150 each participate in a glycyl lysine isopeptide (Lys-Gly) (interchain with G-Cter in SUMO2) cross-link. Lys155 is covalently cross-linked (Glycyl lysine isopeptide (Lys-Gly) (interchain with G-Cter in SUMO); alternate). Lys155 participates in a covalent cross-link: Glycyl lysine isopeptide (Lys-Gly) (interchain with G-Cter in SUMO2); alternate. Residues Lys160 and Lys166 each participate in a glycyl lysine isopeptide (Lys-Gly) (interchain with G-Cter in SUMO2) cross-link. A Glycyl lysine isopeptide (Lys-Gly) (interchain with G-Cter in SUMO2); alternate cross-link involves residue Lys174. Lys174 carries the post-translational modification N6-acetyllysine; alternate. The segment covering 181–201 has biased composition (basic and acidic residues); the sequence is KDKDKKVPEPDNKKKKPKKEE. Lys206 is covalently cross-linked (Glycyl lysine isopeptide (Lys-Gly) (interchain with G-Cter in SUMO2)). Position 282 is an N6-acetyllysine (Lys282). Residue Lys338 forms a Glycyl lysine isopeptide (Lys-Gly) (interchain with G-Cter in SUMO2) linkage. Interaction with DNA regions lie at residues 427 to 428 and 490 to 495; these read KY and RAGNEK. The 334-residue stretch at 434–767 folds into the Topo IB-type catalytic domain; it reads SSRIKGEKDW…IDMADEDYEF (334 aa). At Ser508 the chain carries Phosphoserine; by CK2. Lys551 is covalently cross-linked (Glycyl lysine isopeptide (Lys-Gly) (interchain with G-Cter in SUMO2)). The segment at 587 to 589 is interaction with DNA; sequence TAK. Glycyl lysine isopeptide (Lys-Gly) (interchain with G-Cter in SUMO2) cross-links involve residues Lys644, Lys702, and Lys714. The O-(3'-phospho-DNA)-tyrosine intermediate role is filled by Tyr725.

This sequence belongs to the type IB topoisomerase family. In terms of assembly, monomer. Interacts with ERCC6. Interacts with TPRN; TPRN interacts with a number of DNA damage response proteins, is recruited to sites of DNA damage and may play a role in DNA damage repair. Sumoylated. Lys-119 is the main site of sumoylation. Sumoylation plays a role in partitioning TOP1 between nucleoli and nucleoplasm. Levels are dramatically increased on camptothecin (CPT) treatment. Post-translationally, phosphorylation at Ser-508 by CK2 increases binding to supercoiled DNA and sensitivity to camptothecin.

Its subcellular location is the nucleus. The protein resides in the nucleolus. It localises to the nucleoplasm. It catalyses the reaction ATP-independent breakage of single-stranded DNA, followed by passage and rejoining.. Its activity is regulated as follows. Specifically inhibited by camptothecin (CPT), a plant alkaloid with antitumor activity. Functionally, releases the supercoiling and torsional tension of DNA introduced during the DNA replication and transcription by transiently cleaving and rejoining one strand of the DNA duplex. Introduces a single-strand break via transesterification at a target site in duplex DNA. The scissile phosphodiester is attacked by the catalytic tyrosine of the enzyme, resulting in the formation of a DNA-(3'-phosphotyrosyl)-enzyme intermediate and the expulsion of a 5'-OH DNA strand. The free DNA strand then rotates around the intact phosphodiester bond on the opposing strand, thus removing DNA supercoils. Finally, in the religation step, the DNA 5'-OH attacks the covalent intermediate to expel the active-site tyrosine and restore the DNA phosphodiester backbone. Regulates the alternative splicing of tissue factor (F3) pre-mRNA in endothelial cells. Involved in the circadian transcription of the core circadian clock component BMAL1 by altering the chromatin structure around the ROR response elements (ROREs) on the BMAL1 promoter. This is DNA topoisomerase 1 (TOP1) from Chlorocebus aethiops (Green monkey).